The following is a 330-amino-acid chain: MKKQFIQKQQQISFVKSFFSRQLEQQLGLIEVQAPILSRVGDGTQDNLSGSEKAVQVKVKSLPDSTFEVVHSLAKWKRKTLGRFDFGADQGVYTHMKALRPDEDRLSAIHSVYVDQWDWERVMGDGERNLAYLKSTVNKIYAAIKETEAAISAEFGVKPFLPDHIQFIHSESLRARFPDLDAKGRERAIAKELGAVFLIGIGGKLADGQSHDVRAPDYDDWTSPSAEGFSGLNGDIIVWNPILEDAFEISSMGIRVDAEALKRQLALTGDEDRLELEWHQSLLRGEMPQTIGGGIGQSRLVMLLLQKQHIGQVQCGVWGPEISEKVDGLL.

Belongs to the class-II aminoacyl-tRNA synthetase family. AsnA subfamily.

The protein resides in the cytoplasm. The catalysed reaction is L-aspartate + NH4(+) + ATP = L-asparagine + AMP + diphosphate + H(+). It participates in amino-acid biosynthesis; L-asparagine biosynthesis; L-asparagine from L-aspartate (ammonia route): step 1/1. This chain is Aspartate--ammonia ligase, found in Yersinia pseudotuberculosis serotype O:1b (strain IP 31758).